Consider the following 111-residue polypeptide: MKIWKNILNIILALAVPIGLLFISMMIGEGVLDLFLDILNINYDDLSYLEEKAFAMFIPLLIIALTLLVTFLHHRSLRPLRLSTGFLSKETYKNYGIGIGIVFIFLSLIQS.

The next 2 membrane-spanning stretches (helical) occupy residues Ile7 to Ile27 and Ala53 to His73.

It localises to the cell membrane. This is an uncharacterized protein from Bacillus anthracis.